The following is a 481-amino-acid chain: Thyroid receptor-interacting protein 6 (481 aa).

Residues 1–12 (MSGPTWLPPKQP) are compositionally biased toward pro residues. The segment at 1-259 (MSGPTWLPPK…QVPLSQPPEE (259 aa)) is disordered. Position 25 is an asymmetric dimethylarginine; alternate (R25). R25 is subject to Omega-N-methylarginine; alternate. Phosphotyrosine; by SRC is present on Y55. S92 carries the phosphoserine modification. Over residues 108–122 (DGGRGHAPRRPDRQA) the composition is skewed to basic and acidic residues. R111 is modified (omega-N-methylarginine). Low complexity-rich tracts occupy residues 153–173 (SPYG…AGPA) and 183–193 (PVRGCGPPRRG). Omega-N-methylarginine occurs at positions 185 and 192. Residue S195 is modified to Phosphoserine. R211 is subject to Omega-N-methylarginine. Positions 221-233 (SHREPGPGVKEEA) are enriched in basic and acidic residues. Position 243 is an omega-N-methylarginine (R243). S254 carries the phosphoserine modification. 3 consecutive LIM zinc-binding domains span residues 284–321 (CGGC…QLRG), 344–403 (CSTC…FAPR), and 404–472 (CSVC…RIQE). An interaction with MAGI1 and PTPN13 region spans residues 474–481 (SATVTTDC).

Belongs to the zyxin/ajuba family. As to quaternary structure, specifically interacts with the ligand binding domain of the thyroid receptor (TR) in the presence of thyroid hormone. Interacts (via the third LIM domain and C-terminus) with PTPN13 (via the second PDZ domain). Interacts (via the second LIM domain or via the third LIM domain plus C-terminus) with PDLIM4 (via PDZ domain). Found in a complex with PTPN13 and PDLIM4. Interacts with SVIL isoform 2. Interacts with LPAR2 but not other LPA receptors. Interacts with PRKAA2. Interacts with MAGI1. Interacts with SCRIB. Phosphorylation at Tyr-55 by SRC is required for enhancement of lysophosphatidic acid-induced cell migration. Tyr-55 is dephosphorylated by PTPN13.

It localises to the cytoplasm. Its subcellular location is the cytoskeleton. It is found in the cell junction. The protein resides in the focal adhesion. The protein localises to the nucleus. Functionally, relays signals from the cell surface to the nucleus to weaken adherens junction and promote actin cytoskeleton reorganization and cell invasiveness. Involved in lysophosphatidic acid-induced cell adhesion and migration. Acts as a transcriptional coactivator for NF-kappa-B and JUN, and mediates the transrepression of these transcription factors induced by glucocorticoid receptor. The polypeptide is Thyroid receptor-interacting protein 6 (TRIP6) (Bos taurus (Bovine)).